Reading from the N-terminus, the 369-residue chain is DNA replication and repair protein RecF (369 aa).

ATP is bound at residue 30-37 (GDNGSGKT).

It belongs to the RecF family.

It localises to the cytoplasm. Its function is as follows. The RecF protein is involved in DNA metabolism; it is required for DNA replication and normal SOS inducibility. RecF binds preferentially to single-stranded, linear DNA. It also seems to bind ATP. This is DNA replication and repair protein RecF from Pseudomonas aeruginosa (strain UCBPP-PA14).